We begin with the raw amino-acid sequence, 245 residues long: Exosome complex component RRP41 (245 aa).

Ala2 bears the N-acetylalanine mark.

The protein belongs to the RNase PH family. In terms of assembly, component of the RNA exosome core complex (Exo-9), composed of EXOSC1, EXOSC2, EXOSC3, EXOSC4, EXOSC5, EXOSC6, EXOSC7, EXOSC8 and EXOSC9; within the complex interacts with EXOSC2, EXOSC7 and EXOSC9. The catalytically inactive RNA exosome core complex (Exo-9) associates with the catalytic subunit EXOSC10/RRP6. Exo-9 may associate with DIS3 to form the nucleolar exosome complex, or DIS3L to form the cytoplasmic exosome complex. Exo-9 is formed by a hexameric base ring consisting of the heterodimers EXOSC4-EXOSC9, EXOSC5-EXOSC8 and EXOSC6-EXOSC7, and a cap ring consisting of EXOSC1, EXOSC2 and EXOSC3. The RNA exosome complex associates with cofactors C1D/RRP47, MPHOSPH6/MPP6 and MTREX/MTR4. Interacts with DDX60. Interacts with DIS3; the interaction is direct.

The protein resides in the cytoplasm. It localises to the nucleus. The protein localises to the nucleolus. It is found in the nucleoplasm. Functionally, non-catalytic component of the RNA exosome complex which has 3'-&gt;5' exoribonuclease activity and participates in a multitude of cellular RNA processing and degradation events. In the nucleus, the RNA exosome complex is involved in proper maturation of stable RNA species such as rRNA, snRNA and snoRNA, in the elimination of RNA processing by-products and non-coding 'pervasive' transcripts, such as antisense RNA species and promoter-upstream transcripts (PROMPTs), and of mRNAs with processing defects, thereby limiting or excluding their export to the cytoplasm. The RNA exosome may be involved in Ig class switch recombination (CSR) and/or Ig variable region somatic hypermutation (SHM) by targeting AICDA deamination activity to transcribed dsDNA substrates. In the cytoplasm, the RNA exosome complex is involved in general mRNA turnover and specifically degrades inherently unstable mRNAs containing AU-rich elements (AREs) within their 3' untranslated regions, and in RNA surveillance pathways, preventing translation of aberrant mRNAs. It seems to be involved in degradation of histone mRNA. The catalytic inactive RNA exosome core complex of 9 subunits (Exo-9) is proposed to play a pivotal role in the binding and presentation of RNA for ribonucleolysis, and to serve as a scaffold for the association with catalytic subunits and accessory proteins or complexes. EXOSC4 binds to ARE-containing RNAs. In Mus musculus (Mouse), this protein is Exosome complex component RRP41 (Exosc4).